The chain runs to 514 residues: Beta-secretase 2 (514 aa).

Residues 1 to 19 (MGALLRALLLLVLAQWLLS) form the signal peptide. A propeptide spanning residues 20–62 (AVPALAPAPFTLPLQVAGATNHRASAVPGLGTPELPRADGLAL) is cleaved from the precursor. Topologically, residues 20–469 (AVPALAPAPF…NEPILWIVSY (450 aa)) are extracellular. One can recognise a Peptidase A1 domain in the interval 88–425 (YYLEMLIGTP…DRAQRRVGFA (338 aa)). The active site involves D106. Residue N166 is glycosylated (N-linked (GlcNAc...) asparagine). Disulfide bonds link C229-C429, C288-C453, and C340-C389. D299 is an active-site residue. A glycan (N-linked (GlcNAc...) asparagine) is linked at N362. A helical transmembrane segment spans residues 470-490 (ALMSVCGAILLVLILLLLLPL). Residues 491–514 (HCRHAPRDPEVVNDESSLVRHRWK) are Cytoplasmic-facing.

The protein belongs to the peptidase A1 family. In terms of assembly, monomer. Interacts with RTN3 and RTN4. Post-translationally, undergoes autoproteolytic cleavage. Glycosylated. In terms of tissue distribution, high expression in pancreatic islets. Expressed at much lower levels in the pituitary, colon, and ovaries and is nearly absent from all the other tissues.

Its subcellular location is the cell membrane. It is found in the golgi apparatus. The protein resides in the endoplasmic reticulum. It localises to the endosome. The protein localises to the melanosome. It catalyses the reaction Broad endopeptidase specificity. Cleaves Glu-Val-Asn-Leu-|-Asp-Ala-Glu-Phe in the Swedish variant of Alzheimer's amyloid precursor protein.. In terms of biological role, responsible for the proteolytic processing of the amyloid precursor protein (APP). Cleaves APP, between residues 690 and 691, leading to the generation and extracellular release of beta-cleaved soluble APP, and a corresponding cell-associated C-terminal fragment which is later released by gamma-secretase. It has also been shown that it can cleave APP between residues 671 and 672. Involved in the proteolytic shedding of PMEL at early stages of melanosome biogenesis. Cleaves PMEL within the M-beta fragment to release the amyloidogenic PMEL luminal fragment containing M-alpha and a small portion of M-beta N-terminus. This is a prerequisite step for subsequent processing and assembly of PMEL fibrils into amyloid sheets. Responsible also for the proteolytic processing of CLTRN in pancreatic beta cells. In Mus musculus (Mouse), this protein is Beta-secretase 2 (Bace2).